The primary structure comprises 481 residues: Rho GTPase-activating protein 15 (481 aa).

Phosphoserine is present on residues serine 51, serine 111, serine 204, serine 207, and serine 249. The region spanning 87 to 197 (MVEKEGYLQK…WFQAIKNAID (111 aa)) is the PH domain. Residues 287–476 (SHLHTVCERE…FMLTEYDKIF (190 aa)) enclose the Rho-GAP domain.

Its subcellular location is the cytoplasm. It is found in the membrane. In terms of biological role, GTPase activator for the Rho-type GTPases by converting them to an inactive GDP-bound state. Has activity toward RAC1. Overexpression results in an increase in actin stress fibers and cell contraction. In Mus musculus (Mouse), this protein is Rho GTPase-activating protein 15 (Arhgap15).